The primary structure comprises 426 residues: Serine--tRNA ligase (426 aa).

Threonine 231–glutamate 233 provides a ligand contact to L-serine. ATP is bound at residue arginine 262–glutamate 264. Glutamate 285 contacts L-serine. An ATP-binding site is contributed by glutamate 349–serine 352. Serine 385 contacts L-serine.

It belongs to the class-II aminoacyl-tRNA synthetase family. Type-1 seryl-tRNA synthetase subfamily. In terms of assembly, homodimer. The tRNA molecule binds across the dimer.

It localises to the cytoplasm. The enzyme catalyses tRNA(Ser) + L-serine + ATP = L-seryl-tRNA(Ser) + AMP + diphosphate + H(+). The catalysed reaction is tRNA(Sec) + L-serine + ATP = L-seryl-tRNA(Sec) + AMP + diphosphate + H(+). It functions in the pathway aminoacyl-tRNA biosynthesis; selenocysteinyl-tRNA(Sec) biosynthesis; L-seryl-tRNA(Sec) from L-serine and tRNA(Sec): step 1/1. Catalyzes the attachment of serine to tRNA(Ser). Is also able to aminoacylate tRNA(Sec) with serine, to form the misacylated tRNA L-seryl-tRNA(Sec), which will be further converted into selenocysteinyl-tRNA(Sec). The protein is Serine--tRNA ligase of Legionella pneumophila (strain Lens).